Here is a 384-residue protein sequence, read N- to C-terminus: GDSL esterase/lipase At1g71691 (384 aa).

Positions 1–27 are cleaved as a signal peptide; that stretch reads MAFHFRRLCFFSALLAVVLQLLHGVSG. The Nucleophile role is filled by Ser62. Residues Asp348 and His351 contribute to the active site.

Belongs to the 'GDSL' lipolytic enzyme family.

It localises to the secreted. This is GDSL esterase/lipase At1g71691 from Arabidopsis thaliana (Mouse-ear cress).